The primary structure comprises 413 residues: NADH-quinone oxidoreductase subunit D (413 aa).

The protein belongs to the complex I 49 kDa subunit family. NDH-1 is composed of 14 different subunits. Subunits NuoB, C, D, E, F, and G constitute the peripheral sector of the complex.

It localises to the cell inner membrane. It carries out the reaction a quinone + NADH + 5 H(+)(in) = a quinol + NAD(+) + 4 H(+)(out). Functionally, NDH-1 shuttles electrons from NADH, via FMN and iron-sulfur (Fe-S) centers, to quinones in the respiratory chain. The immediate electron acceptor for the enzyme in this species is believed to be ubiquinone. Couples the redox reaction to proton translocation (for every two electrons transferred, four hydrogen ions are translocated across the cytoplasmic membrane), and thus conserves the redox energy in a proton gradient. The sequence is that of NADH-quinone oxidoreductase subunit D from Rhodobacter capsulatus (Rhodopseudomonas capsulata).